Consider the following 708-residue polypeptide: Elongation factor G (708 aa).

The tr-type G domain occupies Met-9–Glu-289. GTP-binding positions include Ala-18–Thr-25, Asp-86–His-90, and Asn-140–Asp-143.

The protein belongs to the TRAFAC class translation factor GTPase superfamily. Classic translation factor GTPase family. EF-G/EF-2 subfamily.

The protein resides in the cytoplasm. Its function is as follows. Catalyzes the GTP-dependent ribosomal translocation step during translation elongation. During this step, the ribosome changes from the pre-translocational (PRE) to the post-translocational (POST) state as the newly formed A-site-bound peptidyl-tRNA and P-site-bound deacylated tRNA move to the P and E sites, respectively. Catalyzes the coordinated movement of the two tRNA molecules, the mRNA and conformational changes in the ribosome. The polypeptide is Elongation factor G (Parabacteroides distasonis (strain ATCC 8503 / DSM 20701 / CIP 104284 / JCM 5825 / NCTC 11152)).